Here is a 356-residue protein sequence, read N- to C-terminus: Molybdenum import ATP-binding protein ModC (356 aa).

One can recognise an ABC transporter domain in the interval 1–232 (MEDIHARFHI…LDLPIRLGED (232 aa)). Position 33–40 (33–40 (GHSGSGKT)) interacts with ATP. The 66-residue stretch at 291 to 356 (ETSVLNLLRG…VQVKSVALME (66 aa)) folds into the Mop domain.

It belongs to the ABC transporter superfamily. Molybdate importer (TC 3.A.1.8) family. In terms of assembly, the complex is composed of two ATP-binding proteins (ModC), two transmembrane proteins (ModB) and a solute-binding protein (ModA).

The protein localises to the cell inner membrane. The catalysed reaction is molybdate(out) + ATP + H2O = molybdate(in) + ADP + phosphate + H(+). Its function is as follows. Part of the ABC transporter complex ModABC involved in molybdenum import. Responsible for energy coupling to the transport system. This Methylococcus capsulatus (strain ATCC 33009 / NCIMB 11132 / Bath) protein is Molybdenum import ATP-binding protein ModC.